A 142-amino-acid polypeptide reads, in one-letter code: MQQFNFFMNDVVQEARNDMVHAGYTELKTAEEVEEVLTQKGTTLVMVNSVCGCAGGIARPAAAYMKNYETQPDRFVTVFAGQDKEATARAREFFTGYGPSSPSFALLKDGQIQTMVERHEIEGHEPIEVVQKLEQAVDTYCK.

The protein belongs to the bacilliredoxin family.

The protein is Bacilliredoxin ABC2448 of Shouchella clausii (strain KSM-K16) (Alkalihalobacillus clausii).